A 299-amino-acid chain; its full sequence is ATP phosphoribosyltransferase (299 aa).

Belongs to the ATP phosphoribosyltransferase family. Long subfamily. Equilibrium between an active dimeric form, an inactive hexameric form and higher aggregates. Interconversion between the various forms is largely reversible and is influenced by the natural substrates and inhibitors of the enzyme. Mg(2+) serves as cofactor.

The protein resides in the cytoplasm. It carries out the reaction 1-(5-phospho-beta-D-ribosyl)-ATP + diphosphate = 5-phospho-alpha-D-ribose 1-diphosphate + ATP. It participates in amino-acid biosynthesis; L-histidine biosynthesis; L-histidine from 5-phospho-alpha-D-ribose 1-diphosphate: step 1/9. Its activity is regulated as follows. Feedback inhibited by histidine. Catalyzes the condensation of ATP and 5-phosphoribose 1-diphosphate to form N'-(5'-phosphoribosyl)-ATP (PR-ATP). Has a crucial role in the pathway because the rate of histidine biosynthesis seems to be controlled primarily by regulation of HisG enzymatic activity. The sequence is that of ATP phosphoribosyltransferase from Buchnera aphidicola subsp. Baizongia pistaciae (strain Bp).